Consider the following 351-residue polypeptide: MNELKNDRLLRALLREPVDTTPVWIMRQAGRYLPEYRATRARAGSFMDLCQSPEMACEVTLQPLERFPLDAAILFSDILTIPDAMGLGLYFSEGEGPRFERPVQDAAAIRALGVPDPETELRYVTDAVRLIRRELDGRVPLIGFSGSPWTLATYMVEGGSSKEFARIKGMLYDDPSTLHHLLGVLAEAVTVYLNAQIAAGAQAVMVFDTWGGSLTPEGYREFSLAYMQRIVAGLTREHEGRRVPVTLFTKGGGAWLEVMAETGCDALGLDWTVNIGEARRRVGDRVALQGNLDPAVLYASAERVRAAARKVVEDFGPGSGHVFNLGHGIHPGIDPEKVAALVDEVHKAGMK.

Substrate-binding positions include 27–31 (RQAGR), Asp77, Tyr154, Thr209, and His327.

The protein belongs to the uroporphyrinogen decarboxylase family. As to quaternary structure, homodimer.

It localises to the cytoplasm. It carries out the reaction uroporphyrinogen III + 4 H(+) = coproporphyrinogen III + 4 CO2. It functions in the pathway porphyrin-containing compound metabolism; protoporphyrin-IX biosynthesis; coproporphyrinogen-III from 5-aminolevulinate: step 4/4. Its function is as follows. Catalyzes the decarboxylation of four acetate groups of uroporphyrinogen-III to yield coproporphyrinogen-III. This is Uroporphyrinogen decarboxylase from Thioalkalivibrio sulfidiphilus (strain HL-EbGR7).